The following is a 211-amino-acid chain: Probable nicotinate-nucleotide adenylyltransferase (211 aa).

Belongs to the NadD family.

It carries out the reaction nicotinate beta-D-ribonucleotide + ATP + H(+) = deamido-NAD(+) + diphosphate. It functions in the pathway cofactor biosynthesis; NAD(+) biosynthesis; deamido-NAD(+) from nicotinate D-ribonucleotide: step 1/1. Its function is as follows. Catalyzes the reversible adenylation of nicotinate mononucleotide (NaMN) to nicotinic acid adenine dinucleotide (NaAD). The sequence is that of Probable nicotinate-nucleotide adenylyltransferase from Wigglesworthia glossinidia brevipalpis.